The primary structure comprises 396 residues: S-adenosylmethionine synthase (396 aa).

Position 16 (His16) interacts with ATP. Asp18 lines the Mg(2+) pocket. K(+) is bound at residue Glu44. 2 residues coordinate L-methionine: Glu57 and Gln100. Positions Gln100–Arg110 are flexible loop. ATP-binding positions include Asp167 to Lys169, Arg232 to Phe233, Asp241, Arg247 to Lys248, Ala264, and Lys268. Position 241 (Asp241) interacts with L-methionine. An L-methionine-binding site is contributed by Lys272.

This sequence belongs to the AdoMet synthase family. As to quaternary structure, homotetramer; dimer of dimers. Mg(2+) is required as a cofactor. Requires K(+) as cofactor.

The protein resides in the cytoplasm. The enzyme catalyses L-methionine + ATP + H2O = S-adenosyl-L-methionine + phosphate + diphosphate. Its pathway is amino-acid biosynthesis; S-adenosyl-L-methionine biosynthesis; S-adenosyl-L-methionine from L-methionine: step 1/1. Functionally, catalyzes the formation of S-adenosylmethionine (AdoMet) from methionine and ATP. The overall synthetic reaction is composed of two sequential steps, AdoMet formation and the subsequent tripolyphosphate hydrolysis which occurs prior to release of AdoMet from the enzyme. The sequence is that of S-adenosylmethionine synthase from Ralstonia pickettii (strain 12J).